A 98-amino-acid chain; its full sequence is Small ribosomal subunit protein bS20 (98 aa).

The segment covering 1-12 (MAPKKTTKKGGP) has biased composition (basic residues). The disordered stretch occupies residues 1–20 (MAPKKTTKKGGPQKRPSAEK).

The protein belongs to the bacterial ribosomal protein bS20 family.

In terms of biological role, binds directly to 16S ribosomal RNA. The protein is Small ribosomal subunit protein bS20 of Chlamydia caviae (strain ATCC VR-813 / DSM 19441 / 03DC25 / GPIC) (Chlamydophila caviae).